Consider the following 257-residue polypeptide: Putative cysteine-rich repeat secretory protein 28 (257 aa).

Residues 1–26 form the signal peptide; that stretch reads MFSTFGSVPILTVVAIQLFLIRNVLS. Gnk2-homologous domains are found at residues 32 to 136 and 142 to 254; these read AYLH…TVDS and YEND…LYPF.

The protein belongs to the cysteine-rich repeat secretory protein family.

It is found in the secreted. The protein is Putative cysteine-rich repeat secretory protein 28 (CRRSP28) of Arabidopsis thaliana (Mouse-ear cress).